The following is a 1259-amino-acid chain: Autism susceptibility gene 2 protein (1259 aa).

5 disordered regions span residues 1-87 (MDGP…EEDI), 108-285 (LKPQ…QDCC), 299-470 (CPQV…PPPP), 771-1027 (PNSM…MTVG), and 1119-1146 (REPH…HERG). The segment covering 8-17 (HGLRKKRRSR) has biased composition (basic residues). The segment covering 28 to 41 (GGLGAGAAGGGGAG) has biased composition (gly residues). A compositionally biased stretch (basic and acidic residues) spans 108 to 118 (LKPQERVEKRQ). The segment covering 136-147 (HSKKSRLSHPHH) has biased composition (basic residues). Over residues 148 to 158 (YSSDRENDRNL) the composition is skewed to basic and acidic residues. The span at 177 to 192 (PGQNSCRDSDSESASG) shows a compositional bias: polar residues. Basic and acidic residues predominate over residues 276–285 (RSQEKSQDCC). The segment at 289–472 (IFEPVVLKDP…PTALPPPPPL (184 aa)) is important for regulation of lamellipodia formation. Pro residues-rich tracts occupy residues 331–345 (PPQP…PQGP) and 353–365 (APQP…PRPQ). Residues 386–410 (SLSQPLSAYNSSSLSLNSLSSSRSS) show a composition bias toward low complexity. Positions 436–447 (PNHSPLHSFTPT) are enriched in polar residues. Over residues 801–810 (PSFPTPPPWL) the composition is skewed to pro residues. Composition is skewed to basic and acidic residues over residues 813 to 850 (GELE…VEKR), 876 to 935 (IRAH…EAKQ), and 960 to 993 (REAE…HDLP). Residues 1125–1134 (SHHHHHHHHP) show a composition bias toward basic residues. S1198 and S1233 each carry phosphoserine. Residues 1217–1259 (LSAPPPLISTLGGRPVSPRRTTPLSAEIRERPPSHTLKDIEAR) are disordered. Basic and acidic residues predominate over residues 1243 to 1259 (EIRERPPSHTLKDIEAR).

This sequence belongs to the AUTS2 family. In terms of assembly, component of a PRC1-like complex that contains PCGF5, RNF2, CSNK2B, RYBP and AUTS2. Within this complex, interacts directly with PCGF5 and CSNK2B. Interacts with the histone acetyltransferase EP300/p300. Interacts (via Pro-rich region) with PREX1, DOCK1 and ELMO2. As to expression, strongly expressed in brain, skeletal muscle and kidney. Also expressed in placenta, lung and leukocytes.

The protein localises to the nucleus. It localises to the cytoplasm. It is found in the cytoskeleton. Its subcellular location is the cell projection. The protein resides in the growth cone. In terms of biological role, component of a Polycomb group (PcG) multiprotein PRC1-like complex, a complex class required to maintain the transcriptionally repressive state of many genes, including Hox genes, throughout development. PcG PRC1 complex acts via chromatin remodeling and modification of histones; it mediates monoubiquitination of histone H2A 'Lys-119', rendering chromatin heritably changed in its expressibility. The PRC1-like complex that contains PCGF5, RNF2, CSNK2B, RYBP and AUTS2 has decreased histone H2A ubiquitination activity, due to the phosphorylation of RNF2 by CSNK2B. As a consequence, the complex mediates transcriptional activation. In the cytoplasm, plays a role in axon and dendrite elongation and in neuronal migration during embryonic brain development. Promotes reorganization of the actin cytoskeleton, lamellipodia formation and neurite elongation via its interaction with RAC guanine nucleotide exchange factors, which then leads to the activation of RAC1. This is Autism susceptibility gene 2 protein (AUTS2) from Homo sapiens (Human).